A 338-amino-acid polypeptide reads, in one-letter code: Transferrin receptor subunit ESAG7 (338 aa).

The N-terminal stretch at 1-17 (MRFWFVLLALLGKEIYA) is a signal peptide. N-linked (GlcNAc...) asparagine glycosylation is found at Asn-26 and Asn-110. 4 disulfides stabilise this stretch: Cys-34-Cys-161, Cys-84-Cys-311, Cys-144-Cys-215, and Cys-230-Cys-247. N-linked (GlcNAc...) asparagine glycosylation occurs at Asn-234.

Heterodimer composed of ESAG6 and ESAG7. N-glycosylated. Glycosylation is dispensable for heterodimer formation and host transferrin binding.

It is found in the cell membrane. The protein resides in the flagellar pocket. Its function is as follows. Transferrin receptor subunit involved in receptor-mediated acquisition of iron from the environment by binding host TF/transferrin. This Trypanosoma brucei brucei protein is Transferrin receptor subunit ESAG7.